The primary structure comprises 320 residues: Quinolinate synthase (320 aa).

Residues His-34 and Ser-51 each coordinate iminosuccinate. A [4Fe-4S] cluster-binding site is contributed by Cys-96. Residues 122 to 124 and Ser-139 contribute to the iminosuccinate site; that span reads YIN. Residue Cys-182 participates in [4Fe-4S] cluster binding. Iminosuccinate-binding positions include 208–210 and Thr-225; that span reads HPE. Residue Cys-276 coordinates [4Fe-4S] cluster.

It belongs to the quinolinate synthase family. Type 2 subfamily. [4Fe-4S] cluster serves as cofactor.

The protein resides in the cytoplasm. The catalysed reaction is iminosuccinate + dihydroxyacetone phosphate = quinolinate + phosphate + 2 H2O + H(+). It functions in the pathway cofactor biosynthesis; NAD(+) biosynthesis; quinolinate from iminoaspartate: step 1/1. In terms of biological role, catalyzes the condensation of iminoaspartate with dihydroxyacetone phosphate to form quinolinate. This chain is Quinolinate synthase, found in Synechococcus sp. (strain ATCC 27144 / PCC 6301 / SAUG 1402/1) (Anacystis nidulans).